Consider the following 276-residue polypeptide: Diaminopimelate epimerase (276 aa).

3 residues coordinate substrate: Asn-13, Gln-46, and Asn-66. Cys-75 (proton donor) is an active-site residue. Substrate is bound by residues Gly-76–Asn-77, Asn-159, Asn-192, and Glu-210–Arg-211. Cys-219 functions as the Proton acceptor in the catalytic mechanism. Gly-220–Thr-221 contributes to the substrate binding site.

The protein belongs to the diaminopimelate epimerase family. Homodimer.

It is found in the cytoplasm. It catalyses the reaction (2S,6S)-2,6-diaminopimelate = meso-2,6-diaminopimelate. The protein operates within amino-acid biosynthesis; L-lysine biosynthesis via DAP pathway; DL-2,6-diaminopimelate from LL-2,6-diaminopimelate: step 1/1. In terms of biological role, catalyzes the stereoinversion of LL-2,6-diaminopimelate (L,L-DAP) to meso-diaminopimelate (meso-DAP), a precursor of L-lysine and an essential component of the bacterial peptidoglycan. The protein is Diaminopimelate epimerase of Hahella chejuensis (strain KCTC 2396).